The following is a 118-amino-acid chain: Protein TusC (118 aa).

Belongs to the DsrF/TusC family. Heterohexamer, formed by a dimer of trimers. The hexameric TusBCD complex contains 2 copies each of TusB, TusC and TusD. The TusBCD complex interacts with TusE.

It is found in the cytoplasm. In terms of biological role, part of a sulfur-relay system required for 2-thiolation of 5-methylaminomethyl-2-thiouridine (mnm(5)s(2)U) at tRNA wobble positions. This is Protein TusC from Salmonella arizonae (strain ATCC BAA-731 / CDC346-86 / RSK2980).